We begin with the raw amino-acid sequence, 315 residues long: Thymidylate synthase (315 aa).

DUMP is bound by residues Arg-22 and 177–178 (RR). The active-site Nucleophile is the Cys-197. DUMP contacts are provided by residues 217 to 220 (RSAD), Asn-228, and 258 to 260 (HLY). Asp-220 contacts (6R)-5,10-methylene-5,6,7,8-tetrahydrofolate. Ala-314 is a (6R)-5,10-methylene-5,6,7,8-tetrahydrofolate binding site.

It belongs to the thymidylate synthase family. Bacterial-type ThyA subfamily. In terms of assembly, homodimer.

The protein localises to the cytoplasm. The enzyme catalyses dUMP + (6R)-5,10-methylene-5,6,7,8-tetrahydrofolate = 7,8-dihydrofolate + dTMP. Its pathway is pyrimidine metabolism; dTTP biosynthesis. Its function is as follows. Catalyzes the reductive methylation of 2'-deoxyuridine-5'-monophosphate (dUMP) to 2'-deoxythymidine-5'-monophosphate (dTMP) while utilizing 5,10-methylenetetrahydrofolate (mTHF) as the methyl donor and reductant in the reaction, yielding dihydrofolate (DHF) as a by-product. This enzymatic reaction provides an intracellular de novo source of dTMP, an essential precursor for DNA biosynthesis. The protein is Thymidylate synthase of Enterococcus faecalis (strain ATCC 700802 / V583).